A 372-amino-acid polypeptide reads, in one-letter code: Cytochrome b (372 aa).

The next 4 helical transmembrane spans lie at 25 to 45 (FGSMLLTCLALQTMTGFFLAI), 69 to 90 (WMMQNLHAIGASMFFICIYIHI), 105 to 125 (WLSGTTLLIILMATAFFGYVL), and 170 to 190 (FFALHFILPFTIISMSSIHIM). Histidine 75 and histidine 89 together coordinate heme b. The heme b site is built by histidine 174 and histidine 188. Histidine 193 is an a ubiquinone binding site. The next 4 membrane-spanning stretches (helical) occupy residues 218–238 (HKDMLMFTIMITMLFIIMSFT), 280–300 (LGGTVALVLSVTILLTMPFTH), 312–332 (LMQFMFWTLVATFITITWAAT), and 339–358 (FTSIGQVTAILYFLFFTMNP).

The protein belongs to the cytochrome b family. As to quaternary structure, the cytochrome bc1 complex contains 3 respiratory subunits (MT-CYB, CYC1 and UQCRFS1), 2 core proteins (UQCRC1 and UQCRC2) and probably 6 low-molecular weight proteins. Requires heme b as cofactor.

The protein resides in the mitochondrion inner membrane. Functionally, component of the ubiquinol-cytochrome c reductase complex (complex III or cytochrome b-c1 complex) that is part of the mitochondrial respiratory chain. The b-c1 complex mediates electron transfer from ubiquinol to cytochrome c. Contributes to the generation of a proton gradient across the mitochondrial membrane that is then used for ATP synthesis. This Pantherophis vulpinus (Western fox snake) protein is Cytochrome b (MT-CYB).